A 605-amino-acid polypeptide reads, in one-letter code: uncharacterized protein (605 aa).

A disordered region spans residues 22–93; the sequence is FTEPARFYPS…KQGTAVHGAE (72 aa). A compositionally biased stretch (low complexity) spans 46 to 57; the sequence is SENASSSVPSHS.

This is an uncharacterized protein from Treponema pallidum (strain Nichols).